A 141-amino-acid chain; its full sequence is MFACAKLARTPALIRAGSRVAYRPISASVLSRPETRTGEGSTVFNGAQNGVCQLIRREFQTSVISRDIDTAAKFIGAGAATVGVAGSGAGIGTVFGSLIIGYARNPSLKQQLFSYAILGFALSEAMGLFCLMVAFLILFAM.

The N-terminal 66 residues, 1-66, are a transit peptide targeting the mitochondrion; the sequence is MFACAKLART…REFQTSVISR (66 aa). A helical transmembrane segment spans residues 82–102; that stretch reads VGVAGSGAGIGTVFGSLIIGY. Lys109 is modified (N6,N6,N6-trimethyllysine). A helical transmembrane segment spans residues 117 to 137; it reads ILGFALSEAMGLFCLMVAFLI.

Belongs to the ATPase C chain family. As to quaternary structure, F-type ATPases have 2 components, CF(1) - the catalytic core - and CF(0) - the membrane proton channel. CF(1) has five subunits: alpha(3), beta(3), gamma(1), delta(1), epsilon(1). CF(0) has three main subunits: a, b and c. Interacts with TMEM70 and TMEM242. Post-translationally, trimethylated by ATPSCKMT at Lys-109. Methylation is required for proper incorporation of the C subunit into the ATP synthase complex and mitochondrial respiration.

Its subcellular location is the mitochondrion membrane. Mitochondrial membrane ATP synthase (F(1)F(0) ATP synthase or Complex V) produces ATP from ADP in the presence of a proton gradient across the membrane which is generated by electron transport complexes of the respiratory chain. F-type ATPases consist of two structural domains, F(1) - containing the extramembraneous catalytic core and F(0) - containing the membrane proton channel, linked together by a central stalk and a peripheral stalk. During catalysis, ATP synthesis in the catalytic domain of F(1) is coupled via a rotary mechanism of the central stalk subunits to proton translocation. Part of the complex F(0) domain. A homomeric c-ring of probably 10 subunits is part of the complex rotary element. This is ATP synthase F(0) complex subunit C3, mitochondrial from Mus musculus (Mouse).